The chain runs to 149 residues: Globin (149 aa).

A Globin domain is found at 2-149; the sequence is VLTKDEFDSL…KIFTGVAGQL (148 aa). Histidine 100 is a heme binding site.

This sequence belongs to the globin family. In terms of assembly, monomer.

Its function is as follows. Oxygen binding protein. The polypeptide is Globin (Isoparorchis hypselobagri (Giant trematode)).